The primary structure comprises 249 residues: Cell division protein DivIB (249 aa).

The Cytoplasmic portion of the chain corresponds to 1 to 19 (MKEENEYIVKRRKKRRRKR). Residues 20–40 (ITIFLFLLICILVTLCLKLPY) form a helical membrane-spanning segment. The region spanning 41-109 (FNIKYINVEG…NTIDIIVKER (69 aa)) is the POTRA domain. Topologically, residues 41–249 (FNIKYINVEG…KGNPVYSLQQ (209 aa)) are extracellular.

Belongs to the FtsQ/DivIB family. DivIB subfamily.

The protein localises to the cell membrane. Functionally, cell division protein that may be involved in stabilizing or promoting the assembly of the division complex. The chain is Cell division protein DivIB from Clostridium acetobutylicum (strain ATCC 824 / DSM 792 / JCM 1419 / IAM 19013 / LMG 5710 / NBRC 13948 / NRRL B-527 / VKM B-1787 / 2291 / W).